Consider the following 343-residue polypeptide: Pseudaminic acid synthase (343 aa).

The AFP-like domain occupies Ser-287 to Gln-343.

This sequence belongs to the pseudaminic acid synthase family. The cofactor is a divalent metal cation.

It catalyses the reaction 2,4-diacetamido-2,4,6-trideoxy-beta-L-altrose + phosphoenolpyruvate + H2O = pseudaminate + phosphate. Functionally, catalyzes the fifth step in the biosynthesis of pseudaminic acid, a sialic-acid-like sugar that is used to modify flagellin. Catalyzes the condensation of phosphoenolpyruvate with 2,4-diacetamido-2,4,6-trideoxy-beta-l-altropyranose, forming pseudaminic acid. The sequence is that of Pseudaminic acid synthase (pseI) from Campylobacter jejuni subsp. jejuni serotype O:2 (strain ATCC 700819 / NCTC 11168).